We begin with the raw amino-acid sequence, 180 residues long: UPF0227 protein ECA1814 (180 aa).

It belongs to the UPF0227 family.

This chain is UPF0227 protein ECA1814, found in Pectobacterium atrosepticum (strain SCRI 1043 / ATCC BAA-672) (Erwinia carotovora subsp. atroseptica).